The sequence spans 557 residues: Formate--tetrahydrofolate ligase (557 aa).

Residue 65-72 (TPAGEGKT) participates in ATP binding.

This sequence belongs to the formate--tetrahydrofolate ligase family.

The catalysed reaction is (6S)-5,6,7,8-tetrahydrofolate + formate + ATP = (6R)-10-formyltetrahydrofolate + ADP + phosphate. Its pathway is one-carbon metabolism; tetrahydrofolate interconversion. This chain is Formate--tetrahydrofolate ligase, found in Methylorubrum extorquens (strain PA1) (Methylobacterium extorquens).